The sequence spans 72 residues: Translational regulator CsrA (72 aa).

The protein belongs to the CsrA/RsmA family. Homodimer; the beta-strands of each monomer intercalate to form a hydrophobic core, while the alpha-helices form wings that extend away from the core.

It localises to the cytoplasm. A translational regulator that binds mRNA to regulate translation initiation and/or mRNA stability. Usually binds in the 5'-UTR at or near the Shine-Dalgarno sequence preventing ribosome-binding, thus repressing translation. Its main target seems to be the major flagellin gene, while its function is anatagonized by FliW. The protein is Translational regulator CsrA of Clostridium botulinum (strain Okra / Type B1).